Here is a 661-residue protein sequence, read N- to C-terminus: MASTLFYNSMNLSAAVFSRTHFPIPINKDFPLEFSPCIHTDYHLRSRTRSGQKKCLTEVRATVASPTEVPSAPASTQPKKLRILVAGGGIGGLVFALAAKKKGFDVVVFEKDLSAVRGEGQYRGPIQIQSNALAALEAIDMDVAEEVMRVGCVTGDRINGLVDGVSGTWYVKFDTFTPAVERGLPVTRVISRIALQQILARAVGEEIIINDSNVVNFEDLGDKVNVILENGQRYEGDMLVGADGIWSKVRKNLFGLNEAVYSGYTCYTGIADFVPADINSVGYRVFLGHKQYFVSSDVGGGKMQWYAFHKESPGGVDSPNGKKERLLKIFEGWCDNVIDLLLATEEDAILRRDIYDRTPILTWGKGHVTLLGDSVHAMQPNMGQGGCMAIEDGYQLALELDKAWKKSSETGTPVDVASSLRSYENSRRLRVAIIHGMARMAALMASTYKAYLGVGLGPLSFLTKFRIPHPGRVGGRVFIDKAMPLMLSWVLGGNSSKLEGRSPSCRLSDKASDQLRNWFEDDDALERAIDGEWYLIPCGQDNDASQLICLNRDEKNPCIIGSAPHGDVSGISIAIPKPQVSEMHARISYKDGAFYLTDLRSEHGTWIADIEGKRYRVPPNFPARFRPSDAIEIGSQKVAFRVKVMKSSPGSVEKEGILQAA.

The transit peptide at 1-50 directs the protein to the chloroplast; sequence MASTLFYNSMNLSAAVFSRTHFPIPINKDFPLEFSPCIHTDYHLRSRTRS. FAD is bound by residues 82 to 110 and 360 to 373; these read RILV…VVFE and ILTW…LLGD. One can recognise an FHA domain in the interval 558 to 607; that stretch reads CIIGSAPHGDVSGISIAIPKPQVSEMHARISYKDGAFYLTDLRSEHGTWI.

FAD serves as cofactor.

It is found in the plastid. The protein localises to the chloroplast. The catalysed reaction is all-trans-zeaxanthin + 4 reduced [2Fe-2S]-[ferredoxin] + 2 O2 + 4 H(+) = all-trans-violaxanthin + 4 oxidized [2Fe-2S]-[ferredoxin] + 2 H2O. It functions in the pathway plant hormone biosynthesis; abscisate biosynthesis. Its function is as follows. Converts zeaxanthin into antheraxanthin and subsequently violaxanthin. Involved in the epoxidation of zeaxanthin. This Prunus armeniaca (Apricot) protein is Zeaxanthin epoxidase, chloroplastic.